The following is a 101-amino-acid chain: Small ribosomal subunit protein uS14 (101 aa).

This sequence belongs to the universal ribosomal protein uS14 family. In terms of assembly, part of the 30S ribosomal subunit. Contacts proteins S3 and S10.

In terms of biological role, binds 16S rRNA, required for the assembly of 30S particles and may also be responsible for determining the conformation of the 16S rRNA at the A site. This chain is Small ribosomal subunit protein uS14, found in Paraburkholderia phymatum (strain DSM 17167 / CIP 108236 / LMG 21445 / STM815) (Burkholderia phymatum).